A 223-amino-acid chain; its full sequence is Adenylate kinase (223 aa).

17–22 is an ATP binding site; it reads GAGKGT. The tract at residues 37–66 is NMP; sequence STGDMLRSQVAKGTPLGVEAKKIMDQGGLV. Residues threonine 38, arginine 43, 64–66, 93–96, and glutamine 100 contribute to the AMP site; these read GLV and GFPR. The segment at 134-171 is LID; that stretch reads GRLVHPSSGRSYHKLFNPPKVEMTDDVTGEPLVQRSDD. Residues arginine 135 and 144-145 each bind ATP; that span reads SY. 2 residues coordinate AMP: arginine 168 and arginine 179. Glutamine 207 provides a ligand contact to ATP.

It belongs to the adenylate kinase family. AK2 subfamily. As to quaternary structure, monomer.

It localises to the cytoplasm. Its subcellular location is the cytosol. The protein resides in the mitochondrion intermembrane space. The enzyme catalyses AMP + ATP = 2 ADP. Catalyzes the reversible transfer of the terminal phosphate group between ATP and AMP. Plays an important role in cellular energy homeostasis and in adenine nucleotide metabolism. Adenylate kinase activity is critical for regulation of the phosphate utilization and the AMP de novo biosynthesis pathways. In Vanderwaltozyma polyspora (strain ATCC 22028 / DSM 70294 / BCRC 21397 / CBS 2163 / NBRC 10782 / NRRL Y-8283 / UCD 57-17) (Kluyveromyces polysporus), this protein is Adenylate kinase.